The following is a 151-amino-acid chain: UPF0178 protein mma_0312 (151 aa).

This sequence belongs to the UPF0178 family.

The sequence is that of UPF0178 protein mma_0312 from Janthinobacterium sp. (strain Marseille) (Minibacterium massiliensis).